Here is a 132-residue protein sequence, read N- to C-terminus: MVMTDPIADMLTRIRNANMVRHEKLEVPASKIKREIAEILKREGFIRDYEYIEDNKQGILRIFLKYGPNNERVITGLKRISKPGLRVYVKAHEVPRVLNGLGIAILSTSQGILTDKEARQKGTGGEVIAYVW.

The protein belongs to the universal ribosomal protein uS8 family. As to quaternary structure, part of the 30S ribosomal subunit. Contacts proteins S5 and S12.

One of the primary rRNA binding proteins, it binds directly to 16S rRNA central domain where it helps coordinate assembly of the platform of the 30S subunit. This chain is Small ribosomal subunit protein uS8, found in Geobacillus kaustophilus (strain HTA426).